Reading from the N-terminus, the 112-residue chain is Ribonuclease VapC8 (112 aa).

Residues 10–109 (LLDTSVFIAR…TDALIAATAE (100 aa)) form the PINc domain. The Mg(2+) site is built by Asp-12 and Asp-101.

This sequence belongs to the PINc/VapC protein family. The cofactor is Mg(2+).

Toxic component of a type II toxin-antitoxin (TA) system. An RNase. The cognate antitoxin is VapB8. The protein is Ribonuclease VapC8 (vapC8) of Mycobacterium tuberculosis (strain CDC 1551 / Oshkosh).